The following is a 213-amino-acid chain: MIKLFVGLGNPGPDYDATRHNAGFWWIDGLARDLKVHLVPERAYHGLVARANVNGQSVWLLQPQTFMNLSGKSVAALARFFKIQPQEILVAHDELDILPGQAKLKRGGSHAGHNGLRDIHAQLGSPDYWRLRIGIGHPGVKAEVANWVLKKPSPDHRTLIEDSIAHSLKAAPAMLAGDMDKATLLVHTTKPPRPKPPRPAAAPVDAPAAPGDQ.

Tyrosine 15 is a binding site for tRNA. Catalysis depends on histidine 20, which acts as the Proton acceptor. TRNA-binding residues include phenylalanine 66, asparagine 68, and asparagine 114. Residues histidine 187 to glutamine 213 form a disordered region. The segment covering alanine 201–glutamine 213 has biased composition (low complexity).

Belongs to the PTH family. In terms of assembly, monomer.

The protein localises to the cytoplasm. It carries out the reaction an N-acyl-L-alpha-aminoacyl-tRNA + H2O = an N-acyl-L-amino acid + a tRNA + H(+). In terms of biological role, hydrolyzes ribosome-free peptidyl-tRNAs (with 1 or more amino acids incorporated), which drop off the ribosome during protein synthesis, or as a result of ribosome stalling. Catalyzes the release of premature peptidyl moieties from peptidyl-tRNA molecules trapped in stalled 50S ribosomal subunits, and thus maintains levels of free tRNAs and 50S ribosomes. The chain is Peptidyl-tRNA hydrolase from Paracidovorax citrulli (strain AAC00-1) (Acidovorax citrulli).